Here is an 85-residue protein sequence, read N- to C-terminus: U4-theraphotoxin-Hhn1ab (85 aa).

Positions 1–22 are cleaved as a signal peptide; it reads MKVTLIAILTCAAVLVLHTTAA. A propeptide spanning residues 23–48 is cleaved from the precursor; the sequence is EELEAESQLMEVGMPDTELAAVDEER. Disulfide bonds link cysteine 56–cysteine 77 and cysteine 71–cysteine 82.

It belongs to the neurotoxin 12 (Hwtx-2) family. 02 (Hwtx-2) subfamily. Expressed by the venom gland.

It is found in the secreted. Postsynaptic neurotoxin. This is U4-theraphotoxin-Hhn1ab from Cyriopagopus hainanus (Chinese bird spider).